The sequence spans 417 residues: Exodeoxyribonuclease 7 large subunit (417 aa).

This sequence belongs to the XseA family. In terms of assembly, heterooligomer composed of large and small subunits.

The protein localises to the cytoplasm. It carries out the reaction Exonucleolytic cleavage in either 5'- to 3'- or 3'- to 5'-direction to yield nucleoside 5'-phosphates.. Functionally, bidirectionally degrades single-stranded DNA into large acid-insoluble oligonucleotides, which are then degraded further into small acid-soluble oligonucleotides. This Lactococcus lactis subsp. cremoris (strain MG1363) protein is Exodeoxyribonuclease 7 large subunit.